Reading from the N-terminus, the 420-residue chain is Gamma-glutamyl phosphate reductase (420 aa).

Belongs to the gamma-glutamyl phosphate reductase family.

It localises to the cytoplasm. It catalyses the reaction L-glutamate 5-semialdehyde + phosphate + NADP(+) = L-glutamyl 5-phosphate + NADPH + H(+). Its pathway is amino-acid biosynthesis; L-proline biosynthesis; L-glutamate 5-semialdehyde from L-glutamate: step 2/2. Functionally, catalyzes the NADPH-dependent reduction of L-glutamate 5-phosphate into L-glutamate 5-semialdehyde and phosphate. The product spontaneously undergoes cyclization to form 1-pyrroline-5-carboxylate. The sequence is that of Gamma-glutamyl phosphate reductase from Chlorobaculum parvum (strain DSM 263 / NCIMB 8327) (Chlorobium vibrioforme subsp. thiosulfatophilum).